A 356-amino-acid polypeptide reads, in one-letter code: Protein HEXIM1 (356 aa).

Composition is skewed to basic and acidic residues over residues 1 to 11 (MAEPLLSEHQH) and 24 to 47 (VHEE…DSRW). Positions 1–160 (MAEPLLSEHQ…RRRPSKKKRH (160 aa)) are disordered. The span at 48 to 58 (QSRASLQSGSR) shows a compositional bias: polar residues. Over residues 84-93 (CLEKGEKGQN) the composition is skewed to basic and acidic residues. A phosphoserine mark is found at Ser98 and Ser103. Residues 145-160 (LGKKKHRRRPSKKKRH) are compositionally biased toward basic residues. Positions 147–174 (KKKHRRRPSKKKRHWKPYYKLTWEEKKK) are basic region; mediates nuclear localization and interaction with 7SK snRNA and NR3C1. An interaction with P-TEFb region spans residues 199 to 202 (PYNT). Positions 207–247 (MDDHDQEEPDLKTGLYPKRAAAKSDDTSDEDFVEEAGEEDG) are autoinhibitory acidic region; in absence of 7SK snRNA interacts with the basic region preventing interaction with P-TEFb and modulating subcellular localization. The interval 209 to 259 (DHDQEEPDLKTGLYPKRAAAKSDDTSDEDFVEEAGEEDGGSDGMGGDGSEF) is disordered. Ser230 is modified (phosphoserine). Thr233 is subject to Phosphothreonine. A compositionally biased stretch (acidic residues) spans 233–248 (TSDEDFVEEAGEEDGG). Ser234, Ser249, and Ser257 each carry phosphoserine. Residues 280-346 (SKQELIKEYL…LTENELHRQQ (67 aa)) are a coiled coil. The segment at 283-311 (ELIKEYLELEKCLSRKEDENNRLRLESKR) is mediates interaction with CCNT1. The segment at 307–352 (LESKRLGGVDARVRELELELDRLRAENRQLLTENELHRQQERAPPS) is required for inhibition of ESR1-dependent transcription. The interval 337-356 (LTENELHRQQERAPPSKFGD) is disordered.

Belongs to the HEXIM family. Homooligomer and heterooligomer with HEXIM2; probably dimeric. Core component of the 7SK RNP complex, at least composed of 7SK RNA, LARP7, MEPCE, HEXIM1 (or HEXIM2) and P-TEFb (composed of CDK9 and CCNT1/cyclin-T1). Interacts with the N-CoR complex through NCOR1. Interacts with ESR1 and NR3C1. May interact with NF-kappa-B through RELA. Interacts with CCNT2; mediates formation of a tripartite complex with KPNA2. Part of the HDP-RNP complex composed of at least HEXIM1, PRKDC, XRCC5, XRCC6, paraspeckle proteins (SFPQ, NONO, PSPC1, RBM14, and MATR3) and NEAT1 non-coding RNA.

It localises to the nucleus. Its subcellular location is the cytoplasm. In terms of biological role, transcriptional regulator which functions as a general RNA polymerase II transcription inhibitor. Core component of the 7SK RNP complex: in cooperation with 7SK snRNA sequesters P-TEFb in a large inactive 7SK snRNP complex preventing RNA polymerase II phosphorylation and subsequent transcriptional elongation. May also regulate NF-kappa-B, ESR1, NR3C1 and CIITA-dependent transcriptional activity. Plays a role in the regulation of DNA virus-mediated innate immune response by assembling into the HDP-RNP complex, a complex that serves as a platform for IRF3 phosphorylation and subsequent innate immune response activation through the cGAS-STING pathway. This chain is Protein HEXIM1 (Hexim1), found in Rattus norvegicus (Rat).